Reading from the N-terminus, the 213-residue chain is Thymidylate kinase (213 aa).

11–18 (GPDGAGKT) contributes to the ATP binding site.

It belongs to the thymidylate kinase family.

The enzyme catalyses dTMP + ATP = dTDP + ADP. Phosphorylation of dTMP to form dTDP in both de novo and salvage pathways of dTTP synthesis. The sequence is that of Thymidylate kinase from Oenococcus oeni (strain ATCC BAA-331 / PSU-1).